A 55-amino-acid polypeptide reads, in one-letter code: Large ribosomal subunit protein bL33 (55 aa).

Belongs to the bacterial ribosomal protein bL33 family.

In Bartonella bacilliformis (strain ATCC 35685 / KC583 / Herrer 020/F12,63), this protein is Large ribosomal subunit protein bL33.